The following is a 172-amino-acid chain: Small ribosomal subunit protein uS13c (172 aa).

The transit peptide at 1 to 47 (MAHTLATPVAPSVSLICNTKLSVSLSSSSLAFRPVNPKNGGGLSIKC) directs the protein to the chloroplast.

Component of the chloroplast small ribosomal subunit (SSU). Mature 70S chloroplast ribosomes of higher plants consist of a small (30S) and a large (50S) subunit. The 30S small subunit contains 1 molecule of ribosomal RNA (16S rRNA) and 24 different proteins. The 50S large subunit contains 3 rRNA molecules (23S, 5S and 4.5S rRNA) and 33 different proteins. uS13c interacts with translation factor pY (PSRP1).

It is found in the plastid. The protein localises to the chloroplast. Component of the chloroplast ribosome (chloro-ribosome), a dedicated translation machinery responsible for the synthesis of chloroplast genome-encoded proteins, including proteins of the transcription and translation machinery and components of the photosynthetic apparatus. This chain is Small ribosomal subunit protein uS13c (RPS13), found in Spinacia oleracea (Spinach).